The sequence spans 323 residues: Elongation factor P--(R)-beta-lysine ligase (323 aa).

Residue 76-78 participates in substrate binding; the sequence is SPE. ATP-binding positions include 100–102 and Asn-109; that span reads RNE. A substrate-binding site is contributed by Tyr-118. 242–243 is an ATP binding site; it reads EL. Glu-249 contacts substrate. An ATP-binding site is contributed by Gly-298.

Belongs to the class-II aminoacyl-tRNA synthetase family. EpmA subfamily. As to quaternary structure, homodimer.

It catalyses the reaction D-beta-lysine + L-lysyl-[protein] + ATP = N(6)-((3R)-3,6-diaminohexanoyl)-L-lysyl-[protein] + AMP + diphosphate + H(+). In terms of biological role, with EpmB is involved in the beta-lysylation step of the post-translational modification of translation elongation factor P (EF-P). Catalyzes the ATP-dependent activation of (R)-beta-lysine produced by EpmB, forming a lysyl-adenylate, from which the beta-lysyl moiety is then transferred to the epsilon-amino group of a conserved specific lysine residue in EF-P. This is Elongation factor P--(R)-beta-lysine ligase from Pasteurella multocida (strain Pm70).